We begin with the raw amino-acid sequence, 758 residues long: 5-methyltetrahydropteroyltriglutamate--homocysteine methyltransferase (758 aa).

5-methyltetrahydropteroyltri-L-glutamate is bound by residues arginine 17–lysine 20 and lysine 117. L-homocysteine is bound by residues isoleucine 434–serine 436 and glutamate 487. L-methionine contacts are provided by residues isoleucine 434 to serine 436 and glutamate 487. 5-methyltetrahydropteroyltri-L-glutamate is bound by residues arginine 518 to cysteine 519 and tryptophan 564. Aspartate 602 serves as a coordination point for L-homocysteine. Position 602 (aspartate 602) interacts with L-methionine. Glutamate 608 contacts 5-methyltetrahydropteroyltri-L-glutamate. Zn(2+) contacts are provided by histidine 644, cysteine 646, and glutamate 668. Residue histidine 697 is the Proton donor of the active site. Cysteine 729 contributes to the Zn(2+) binding site.

It belongs to the vitamin-B12 independent methionine synthase family. The cofactor is Zn(2+).

The catalysed reaction is 5-methyltetrahydropteroyltri-L-glutamate + L-homocysteine = tetrahydropteroyltri-L-glutamate + L-methionine. Its pathway is amino-acid biosynthesis; L-methionine biosynthesis via de novo pathway; L-methionine from L-homocysteine (MetE route): step 1/1. Functionally, catalyzes the transfer of a methyl group from 5-methyltetrahydrofolate to homocysteine resulting in methionine formation. The protein is 5-methyltetrahydropteroyltriglutamate--homocysteine methyltransferase of Photorhabdus laumondii subsp. laumondii (strain DSM 15139 / CIP 105565 / TT01) (Photorhabdus luminescens subsp. laumondii).